The sequence spans 1393 residues: DNA-directed RNA polymerase subunit beta' (1393 aa).

Residues cysteine 70, cysteine 72, cysteine 85, and cysteine 88 each contribute to the Zn(2+) site. Mg(2+) is bound by residues aspartate 461, aspartate 463, and aspartate 465. Cysteine 804, cysteine 877, cysteine 884, and cysteine 887 together coordinate Zn(2+).

It belongs to the RNA polymerase beta' chain family. The RNAP catalytic core consists of 2 alpha, 1 beta, 1 beta' and 1 omega subunit. When a sigma factor is associated with the core the holoenzyme is formed, which can initiate transcription. Mg(2+) serves as cofactor. Zn(2+) is required as a cofactor.

The enzyme catalyses RNA(n) + a ribonucleoside 5'-triphosphate = RNA(n+1) + diphosphate. Functionally, DNA-dependent RNA polymerase catalyzes the transcription of DNA into RNA using the four ribonucleoside triphosphates as substrates. This Rhodospirillum rubrum (strain ATCC 11170 / ATH 1.1.1 / DSM 467 / LMG 4362 / NCIMB 8255 / S1) protein is DNA-directed RNA polymerase subunit beta'.